The sequence spans 404 residues: Dihydrolipoyllysine-residue acetyltransferase component of pyruvate dehydrogenase complex (404 aa).

Positions 2–78 (PIKILMPALS…PVNSLIAVLS (77 aa)) constitute a Lipoyl-binding domain. Residue Lys43 is modified to N6-lipoyllysine. The Peripheral subunit-binding (PSBD) domain maps to 128–165 (FASPLAKRLAKIRNIRLESVQGSGPHGRIVKQDILSYS). His377 is an active-site residue.

It belongs to the 2-oxoacid dehydrogenase family. Forms a 24-polypeptide structural core with octahedral symmetry. (R)-lipoate serves as cofactor.

It catalyses the reaction N(6)-[(R)-dihydrolipoyl]-L-lysyl-[protein] + acetyl-CoA = N(6)-[(R)-S(8)-acetyldihydrolipoyl]-L-lysyl-[protein] + CoA. Functionally, the pyruvate dehydrogenase complex catalyzes the overall conversion of pyruvate to acetyl-CoA and CO(2). It contains multiple copies of three enzymatic components: pyruvate dehydrogenase (E1), dihydrolipoamide acetyltransferase (E2) and lipoamide dehydrogenase (E3). The protein is Dihydrolipoyllysine-residue acetyltransferase component of pyruvate dehydrogenase complex (pdhC) of Rickettsia typhi (strain ATCC VR-144 / Wilmington).